The sequence spans 207 residues: DNA protection during starvation protein 1 (207 aa).

The span at Met-1 to Ser-12 shows a compositional bias: basic and acidic residues. The disordered stretch occupies residues Met-1–Gly-31. Residues His-83, Asp-110, and Glu-114 each contribute to the Fe cation site.

Belongs to the Dps family. As to quaternary structure, the 12 subunits form a hollow sphere into which the mineral iron core of up to 500 Fe(3+) can be deposited. The homododecameric forms at higher concentration of salt, the homodimeric form under reducing, low-salt conditions. The assembly of the dodecamer is irreversible.

It localises to the cytoplasm. The protein localises to the nucleoid. The enzyme catalyses 2 Fe(2+) + H2O2 + 2 H(+) = 2 Fe(3+) + 2 H2O. In terms of biological role, protects DNA from oxidative damage by sequestering intracellular Fe(2+) ion and storing it in the form of Fe(3+) oxyhydroxide mineral. One hydrogen peroxide oxidizes two Fe(2+) ions, which prevents hydroxyl radical production by the Fenton reaction. Both oligomeric forms of dps exhibit ferroxidase activity and DNA binding. Dodecameric dps is capable of Fe(2+) oxidation/mineralization. Only dimeric dps affords efficient DNA protection against hydroxyl radical-mediated cleavage. The chain is DNA protection during starvation protein 1 (dps1) from Deinococcus radiodurans (strain ATCC 13939 / DSM 20539 / JCM 16871 / CCUG 27074 / LMG 4051 / NBRC 15346 / NCIMB 9279 / VKM B-1422 / R1).